The chain runs to 430 residues: Serine--tRNA ligase (430 aa).

The interval 47–66 is disordered; the sequence is AQAEQNKASKEAGAAKGRGD. 231 to 233 is a binding site for L-serine; the sequence is TSE. ATP is bound at residue 262 to 264; it reads RSE. Glutamate 285 contributes to the L-serine binding site. 349 to 352 contributes to the ATP binding site; sequence EISS. Serine 385 serves as a coordination point for L-serine.

Belongs to the class-II aminoacyl-tRNA synthetase family. Type-1 seryl-tRNA synthetase subfamily. Homodimer. The tRNA molecule binds across the dimer.

The protein resides in the cytoplasm. The enzyme catalyses tRNA(Ser) + L-serine + ATP = L-seryl-tRNA(Ser) + AMP + diphosphate + H(+). It carries out the reaction tRNA(Sec) + L-serine + ATP = L-seryl-tRNA(Sec) + AMP + diphosphate + H(+). It functions in the pathway aminoacyl-tRNA biosynthesis; selenocysteinyl-tRNA(Sec) biosynthesis; L-seryl-tRNA(Sec) from L-serine and tRNA(Sec): step 1/1. Its function is as follows. Catalyzes the attachment of serine to tRNA(Ser). Is also able to aminoacylate tRNA(Sec) with serine, to form the misacylated tRNA L-seryl-tRNA(Sec), which will be further converted into selenocysteinyl-tRNA(Sec). The sequence is that of Serine--tRNA ligase from Paracoccus denitrificans (strain Pd 1222).